The sequence spans 545 residues: MWPRAPATPPPPPWPSKPSAASRSALRRLDLDDGRRQGTEGEENHAPLLCSPAMASSTAFAAAFALLLLASSAAAEGEAVLTLDAGNFTEVVGAHDFIVVEFYAPWCGHCNQLAPEYEAAAAALRSHDPPVVLAKVDASADLNRGLAGEHGVQGYPTIRILRDRGARSHNYAGPRDAAGIVAYLKRQAGPASVEIAASASPPAADSIANDGVVVVGVFPELSGSEFESFMAVAEKMRADYDFRHTTDAGVLPRGDRTVRGPLVRLFKPFDELFVDSQDFDRDALEKFIESSGFPTVVTFDTSPANQKYLLKYFDNAGTKAMLFLSFSDDRAEEFRTQFHEAANQYSANNISFLIGDVTASQGAFQYFGLKESEVPLVFILASKSKYIKPTVEPDQILPYLKEFTEGTLAPHVKSEPIPEVNDQPVKTVVADNLREVVFNSGKNVLLEFYAPWCGHCQKLAPILEEVAVSLKDDEDVVIAKMDGTANDVPSDFAVEGYPSMYFYSSGGNLLPYDGRTAEEIIDFITKNKGSRPGEATTTESVKDEL.

The span at 1–16 (MWPRAPATPPPPPWPS) shows a compositional bias: pro residues. The disordered stretch occupies residues 1 to 24 (MWPRAPATPPPPPWPSKPSAASRS). One can recognise a Thioredoxin 1 domain in the interval 55–189 (ASSTAFAAAF…IVAYLKRQAG (135 aa)). N-linked (GlcNAc...) asparagine glycosylation occurs at asparagine 87. Active-site nucleophile residues include cysteine 107 and cysteine 110. Cysteine 107 and cysteine 110 are disulfide-bonded. Asparagine 349 carries an N-linked (GlcNAc...) asparagine glycan. One can recognise a Thioredoxin 2 domain in the interval 403-545 (FTEGTLAPHV…TTTESVKDEL (143 aa)). Active-site nucleophile residues include cysteine 453 and cysteine 456. A disulfide bridge links cysteine 453 with cysteine 456. Positions 542–545 (KDEL) match the Prevents secretion from ER motif.

The protein belongs to the protein disulfide isomerase family.

The protein resides in the endoplasmic reticulum lumen. The catalysed reaction is Catalyzes the rearrangement of -S-S- bonds in proteins.. Its function is as follows. Acts as a protein-folding catalyst that interacts with nascent polypeptides to catalyze the formation, isomerization, and reduction or oxidation of disulfide bonds. May play a role in storage protein biogenesis. The protein is Protein disulfide isomerase-like 1-3 (PDIL1-3) of Oryza sativa subsp. japonica (Rice).